Consider the following 221-residue polypeptide: Large ribosomal subunit protein uL3 (221 aa).

This sequence belongs to the universal ribosomal protein uL3 family. Part of the 50S ribosomal subunit. Forms a cluster with proteins L14 and L19.

Its function is as follows. One of the primary rRNA binding proteins, it binds directly near the 3'-end of the 23S rRNA, where it nucleates assembly of the 50S subunit. This is Large ribosomal subunit protein uL3 from Chlamydia abortus (strain DSM 27085 / S26/3) (Chlamydophila abortus).